A 149-amino-acid chain; its full sequence is Nucleoside diphosphate kinase (149 aa).

The ATP site is built by Lys9, Phe57, Arg85, Thr91, Arg102, and Asn112. His115 serves as the catalytic Pros-phosphohistidine intermediate.

It belongs to the NDK family. In terms of assembly, homotetramer. Mg(2+) is required as a cofactor.

It is found in the cytoplasm. The catalysed reaction is a 2'-deoxyribonucleoside 5'-diphosphate + ATP = a 2'-deoxyribonucleoside 5'-triphosphate + ADP. It catalyses the reaction a ribonucleoside 5'-diphosphate + ATP = a ribonucleoside 5'-triphosphate + ADP. Its function is as follows. Major role in the synthesis of nucleoside triphosphates other than ATP. The ATP gamma phosphate is transferred to the NDP beta phosphate via a ping-pong mechanism, using a phosphorylated active-site intermediate. The polypeptide is Nucleoside diphosphate kinase (Roseiflexus castenholzii (strain DSM 13941 / HLO8)).